The following is a 216-amino-acid chain: MVSFSSLFVAACAAVTAFALPSELEKRAITTSQQGTSNGYFYSFWTNGGGSVSYNNGASGEYSVSWSNCGSFTSGKGWATGSSRNINFSGSFKPSGNAYLAVYGWTTSPLVEYYIMENYGDYNPGRSMTFKGTVTSDGSVYDIYTHQQVNQPSISGTATFEQYWSIRRTKRSSGTVTTANHFKAWASHGMYLGSHNYQIVSTEGYQSSGSSDITVS.

The first 19 residues, 1 to 19 (MVSFSSLFVAACAAVTAFA), serve as a signal peptide directing secretion. The region spanning 28–216 (AITTSQQGTS…SSGSSDITVS (189 aa)) is the GH11 domain. Glu112 (nucleophile) is an active-site residue. Glu203 functions as the Proton donor in the catalytic mechanism.

Belongs to the glycosyl hydrolase 11 (cellulase G) family.

It is found in the secreted. It catalyses the reaction Endohydrolysis of (1-&gt;4)-beta-D-xylosidic linkages in xylans.. It participates in glycan degradation; xylan degradation. Endo-1,4-beta-xylanase involved in the hydrolysis of xylan, a major structural heterogeneous polysaccharide found in plant biomass representing the second most abundant polysaccharide in the biosphere, after cellulose. Acts as a pathogen-associated molecular pattern (PAMP) that can trigger plant cell death. Triggers a series of immune responses in citrus fruit and enhanced the resistance of citrus and other fruit against fungal pathogens. In Penicillium digitatum (strain Pd1 / CECT 20795) (Green mold), this protein is Ethylene-inducing xylanase.